Consider the following 103-residue polypeptide: uncharacterized protein (103 aa).

Residues Gly33–Ile57 traverse the membrane as a helical segment.

It localises to the membrane. This is an uncharacterized protein from Sinorhizobium fredii (strain NBRC 101917 / NGR234).